The sequence spans 351 residues: Purine permease 3 (351 aa).

Transmembrane regions (helical) follow at residues 4–24 (ALVI…PLIM), 35–55 (IWFS…PLLF), 72–92 (FFLI…LSGF), 108–128 (TAAL…FFMV), 132–152 (FTPF…VLGM), 168–188 (ITGF…LPLV), 207–227 (FQLI…FIAG), 249–269 (VAVF…GLIF), 274–294 (LVSG…AVIF), and 304–324 (GLSL…EIKS). Residues 45–152 (GFPVIFIPLL…LTVGAAVLGM (108 aa)) form the EamA domain. Residues 329-351 (RRIQQEESQETEQSSLSRPISEC) are disordered.

This sequence belongs to the purine permeases (TC 2.A.7.14) family. Restricted to pollen.

The protein resides in the membrane. In terms of biological role, may be involved in transport of purine derivatives during pollen germination and tube elongation. This is Purine permease 3 (PUP3) from Arabidopsis thaliana (Mouse-ear cress).